The sequence spans 754 residues: uncharacterized protein (754 aa).

A run of 10 helical transmembrane segments spans residues 3-23, 24-44, 50-70, 223-243, 254-274, 320-340, 370-390, 392-412, 446-466, and 471-491; these read ITTV…LPQL, PGTL…FIPV, IALT…ILWA, HLMA…AGLI, WIHW…YAWL, VAIL…LIFW, LLLM…SFIA, LLAI…AMVV, WINI…LLVV, and AWRT…WPLW.

To B.subtilis ComEC, N.gonorrhoeae ComA, and H.influenzae Rec2.

It is found in the cell membrane. This is an uncharacterized protein from Escherichia coli (strain K12).